The primary structure comprises 530 residues: DNA damage-binding protein cmr1 (530 aa).

Disordered regions lie at residues 34-115 (VGLF…RKSD) and 224-250 (TKPV…LTTL). A compositionally biased stretch (basic residues) spans 52–62 (AKKKKPAPKKV). Basic and acidic residues predominate over residues 89-108 (EVAKRKADEHDAALQEAERA). Residues 188 to 229 (LTPERIYAMTFHPSESKPLIFAGDKMGHLGVLDASQTKPVSA) form a WD 1 repeat. A compositionally biased stretch (acidic residues) spans 233 to 244 (DEDEEDDDDDPD). WD repeat units lie at residues 252–292 (PHTR…SVER), 302–339 (VPIS…QDSA), 344–384 (LSDK…HKSP), 389–430 (EHES…ASWK), 453–496 (GRWV…LAQL), and 499–530 (DGIT…CLWM).

It belongs to the WD repeat DDB2/WDR76 family.

Its function is as follows. DNA-binding protein that binds to both single- and double-stranded DNA. Binds preferentially to UV-damaged DNA. May be involved in DNA-metabolic processes. The protein is DNA damage-binding protein cmr1 of Aspergillus terreus (strain NIH 2624 / FGSC A1156).